Consider the following 808-residue polypeptide: Receptor like protein 27 (808 aa).

A signal peptide spans 1 to 31; it reads MLFFIKVFMKTILSVLLLFFIFASSFTLVVG. The Extracellular portion of the chain corresponds to 32–740; sequence LAGCRPDQIQ…DEDEEVLNWK (709 aa). N-linked (GlcNAc...) asparagine glycans are attached at residues Asn56, Asn68, Asn90, Asn103, Asn108, Asn144, and Asn167. LRR repeat units follow at residues 96-120, 122-144, 145-170, 172-192, 193-218, 220-241, 242-265, 266-291, 293-314, 315-338, 340-363, and 364-387; these read LQHL…GFGN, NRLE…SFSN, LSQL…NLTK, SILV…LLTL, PFLS…STSS, LEFM…ISKL, INLK…LFSS, FKSL…SKIP, NLEN…LKNL, TKLE…FWNL, RLRR…VLVN, and SSVR…PLSI. Asn213 carries an N-linked (GlcNAc...) asparagine glycan. An N-linked (GlcNAc...) asparagine glycan is attached at Asn313. Asn363 carries N-linked (GlcNAc...) asparagine glycosylation. The stretch at 388-407 is one LRR 13; degenerate repeat; it reads NLLSAWNNSFTGNIPLETCN. 3 N-linked (GlcNAc...) asparagine glycosylation sites follow: Asn394, Asn407, and Asn420. LRR repeat units follow at residues 408-434, 436-456, 457-481, 483-504, 505-529, 532-556, 601-625, 626-649, 650-673, and 675-698; these read RSSL…DFQE, LIVV…IFSD, GALL…LLNC, MLRF…WLKA, LPDL…DRGP, FPKL…YFVN, LTSY…IGLL, KALI…LANV, TELE…LKTL, and FLAY…QITG. Asn480 carries an N-linked (GlcNAc...) asparagine glycan. A glycan (N-linked (GlcNAc...) asparagine) is linked at Asn544. Asn632 and Asn648 each carry an N-linked (GlcNAc...) asparagine glycan. The chain crosses the membrane as a helical span at residues 741–761; that stretch reads AVVIGYWPGLLLGLIMAHVIA. The Cytoplasmic portion of the chain corresponds to 762 to 808; sequence SFKPKWLVKIVGPEKRKEDNPVRLFMTLDSRWDSFNNKKNVEQKSDM.

The protein belongs to the RLP family.

The protein localises to the cell membrane. The sequence is that of Receptor like protein 27 from Arabidopsis thaliana (Mouse-ear cress).